The primary structure comprises 457 residues: Non-structural protein V (457 aa).

Disordered regions lie at residues 26–104 (KTYG…DPDD) and 193–403 (FVPK…MPIK). 2 stretches are compositionally biased toward polar residues: residues 28 to 37 (YGRSSIQQPS) and 77 to 96 (DLSS…SNTR). Over residues 240–252 (SDDEDENQLEYED) the composition is skewed to acidic residues. Ser257 carries the phosphoserine; by host modification. Positions 296–317 (FPEKEETPDVRRKDSLMQDSCK) are enriched in basic and acidic residues. Ser350 is subject to Phosphoserine; by host. Zn(2+) contacts are provided by His406, Cys425, Cys429, Cys441, Cys443, Cys446, Cys450, and Cys453.

This sequence belongs to the paramyxoviruses V protein family. As to quaternary structure, interacts with host IFIH1/MDA5, DHX58/LGP2, STAT1 and STAT2.

It localises to the host cytoplasm. Plays an essential role in the inhibition of host immune response. Prevents the establishment of cellular antiviral state by blocking interferon-alpha/beta (IFN-alpha/beta) production and signaling pathway. Interacts with host IFIH1/MDA5 and DHX58/LGP2 to inhibit the transduction pathway involved in the activation of IFN-beta promoter, thus protecting the virus against cell antiviral state. Blocks the type I interferon signaling pathway by interacting with host STAT1 and STAT2 and thereby inhibiting their phosphorylation and subsequent nuclear translocation. Efficiently blocks the type II interferon signaling pathway. This chain is Non-structural protein V (P/V/C), found in Hendra virus (isolate Horse/Autralia/Hendra/1994).